Reading from the N-terminus, the 986-residue chain is Resact receptor (986 aa).

A signal peptide spans 1–21 (MATTRLLFLLVVAVMITMVRS). Residues 22–507 (ATLHYNPTVI…GELCTNWGLY (486 aa)) lie on the Extracellular side of the membrane. N-linked (GlcNAc...) asparagine glycosylation is found at Asn185, Asn361, and Asn410. The chain crosses the membrane as a helical span at residues 508 to 528 (LGTLIPAFIIIFGGGLGYYIY). Residues 529–986 (RKRAYEAALD…SHSCSALHSS (458 aa)) lie on the Cytoplasmic side of the membrane. Residues 568–836 (LSAISVISNA…PNIIEVRTML (269 aa)) form the Protein kinase domain.

It is found in the membrane. It catalyses the reaction GTP = 3',5'-cyclic GMP + diphosphate. Implicated as a cell-surface receptor on spermatozoa for 'resact' a chemotactic peptide, and on various other cells as a receptor for atrial natriuretic peptide. This chain is Resact receptor, found in Arbacia punctulata (Punctuate sea urchin).